A 469-amino-acid polypeptide reads, in one-letter code: Protein apterous (469 aa).

2 disordered regions span residues 21-44 (GPGA…CGSA) and 111-141 (EVSD…DSKI). LIM zinc-binding domains follow at residues 148-200 (CSGC…CKND) and 210-263 (CSRC…CRTH). Residues 367–426 (TKRMRTSFKHHQLRTMKSYFAINHNPDAKDLKQLSQKTGLPKRVLQVWFQNARAKWRRMM) constitute a DNA-binding region (homeobox).

Expressed in PNS and CNS.

The protein resides in the nucleus. Its function is as follows. Required for the normal development of the wing and halter imaginal disks. This Drosophila melanogaster (Fruit fly) protein is Protein apterous (ap).